Here is a 475-residue protein sequence, read N- to C-terminus: Ribulose bisphosphate carboxylase large chain (475 aa).

A propeptide spanning residues 1-2 is cleaved from the precursor; sequence MS. Residue P3 is modified to N-acetylproline. K14 is subject to N6,N6,N6-trimethyllysine. Positions 123 and 173 each coordinate substrate. K175 functions as the Proton acceptor in the catalytic mechanism. Residue K177 coordinates substrate. Residues K201, D203, and E204 each coordinate Mg(2+). An N6-carboxylysine modification is found at K201. H294 functions as the Proton acceptor in the catalytic mechanism. The substrate site is built by R295, H327, and S379.

The protein belongs to the RuBisCO large chain family. Type I subfamily. As to quaternary structure, heterohexadecamer of 8 large chains and 8 small chains; disulfide-linked. The disulfide link is formed within the large subunit homodimers. Requires Mg(2+) as cofactor. Post-translationally, the disulfide bond which can form in the large chain dimeric partners within the hexadecamer appears to be associated with oxidative stress and protein turnover.

It localises to the plastid. The protein localises to the chloroplast. The catalysed reaction is 2 (2R)-3-phosphoglycerate + 2 H(+) = D-ribulose 1,5-bisphosphate + CO2 + H2O. It carries out the reaction D-ribulose 1,5-bisphosphate + O2 = 2-phosphoglycolate + (2R)-3-phosphoglycerate + 2 H(+). RuBisCO catalyzes two reactions: the carboxylation of D-ribulose 1,5-bisphosphate, the primary event in carbon dioxide fixation, as well as the oxidative fragmentation of the pentose substrate in the photorespiration process. Both reactions occur simultaneously and in competition at the same active site. The protein is Ribulose bisphosphate carboxylase large chain of Notothixos subaureus (Golden mistletoe).